Consider the following 1202-residue polypeptide: Caffeine-induced protein 16 (1202 aa).

A PAP-associated domain is found at 1105 to 1159 (NIALLLRGFFCYYGLTTQYSFDWEAYMIDISSSQLKRKSTEFKDCPFVVLDPFLK).

The chain is Caffeine-induced protein 16 (cid16) from Schizosaccharomyces pombe (strain 972 / ATCC 24843) (Fission yeast).